The chain runs to 342 residues: S-adenosylmethionine:tRNA ribosyltransferase-isomerase (342 aa).

It belongs to the QueA family. As to quaternary structure, monomer.

The protein localises to the cytoplasm. It carries out the reaction 7-aminomethyl-7-carbaguanosine(34) in tRNA + S-adenosyl-L-methionine = epoxyqueuosine(34) in tRNA + adenine + L-methionine + 2 H(+). It participates in tRNA modification; tRNA-queuosine biosynthesis. Functionally, transfers and isomerizes the ribose moiety from AdoMet to the 7-aminomethyl group of 7-deazaguanine (preQ1-tRNA) to give epoxyqueuosine (oQ-tRNA). This Campylobacter jejuni subsp. jejuni serotype O:23/36 (strain 81-176) protein is S-adenosylmethionine:tRNA ribosyltransferase-isomerase.